The primary structure comprises 215 residues: MGQKVHPYGFRLGISKDWKARWINEKNYKEYLLEDLKIRDYIKKTYHSAGVSDIFIERPEPGKVSITIKCARPGVIIGRKGSEVKKLRAGLERLINRKFQLNIEEVKTPETDALLVAEDIASRIEKRASYKRAMKRAIFTAMRKGAKGIKIMVSGRLNGAEIARTEWYLEGRLPLQTLKSDIDYGYTTALTKMGIIGVRVWIYKGDVAQKKATEA.

The KH type-2 domain maps to 38–107 (IRDYIKKTYH…KFQLNIEEVK (70 aa)).

It belongs to the universal ribosomal protein uS3 family. In terms of assembly, part of the 30S ribosomal subunit. Forms a tight complex with proteins S10 and S14.

In terms of biological role, binds the lower part of the 30S subunit head. Binds mRNA in the 70S ribosome, positioning it for translation. The polypeptide is Small ribosomal subunit protein uS3 (Kosmotoga olearia (strain ATCC BAA-1733 / DSM 21960 / TBF 19.5.1)).